Reading from the N-terminus, the 134-residue chain is Large-conductance mechanosensitive channel (134 aa).

2 consecutive transmembrane segments (helical) span residues 10-30 (FAMRGNVVDLAVGIIIGGAFG) and 76-96 (GAFLQTIVDFVIIAFSIFVVI).

It belongs to the MscL family. Homopentamer.

It is found in the cell inner membrane. Functionally, channel that opens in response to stretch forces in the membrane lipid bilayer. May participate in the regulation of osmotic pressure changes within the cell. The sequence is that of Large-conductance mechanosensitive channel from Prosthecochloris aestuarii (strain DSM 271 / SK 413).